A 485-amino-acid chain; its full sequence is Pyruvate kinase (485 aa).

Arg33 provides a ligand contact to substrate. K(+) is bound by residues Asn35, Ser37, Asp67, and Thr68. 35 to 38 serves as a coordination point for ATP; the sequence is NFSH. Residues Arg74 and Lys155 each contribute to the ATP site. Glu221 contacts Mg(2+). Residues Gly244, Asp245, and Thr277 each contribute to the substrate site. Position 245 (Asp245) interacts with Mg(2+).

It belongs to the pyruvate kinase family. As to quaternary structure, homotetramer. Mg(2+) is required as a cofactor. Requires K(+) as cofactor.

It carries out the reaction pyruvate + ATP = phosphoenolpyruvate + ADP + H(+). The protein operates within carbohydrate degradation; glycolysis; pyruvate from D-glyceraldehyde 3-phosphate: step 5/5. The sequence is that of Pyruvate kinase (pyk) from Chlamydia trachomatis serovar D (strain ATCC VR-885 / DSM 19411 / UW-3/Cx).